The chain runs to 923 residues: Phosphoenolpyruvate carboxylase (923 aa).

Catalysis depends on residues His149 and Lys585.

This sequence belongs to the PEPCase type 1 family. Mg(2+) is required as a cofactor.

It catalyses the reaction oxaloacetate + phosphate = phosphoenolpyruvate + hydrogencarbonate. Its function is as follows. Forms oxaloacetate, a four-carbon dicarboxylic acid source for the tricarboxylic acid cycle. The protein is Phosphoenolpyruvate carboxylase of Nocardia farcinica (strain IFM 10152).